Here is a 351-residue protein sequence, read N- to C-terminus: Silk gland factor 3 (351 aa).

Disordered regions lie at residues A61–R88 and S131–S154. The span at D135–D145 shows a compositional bias: basic and acidic residues. Positions E149–D223 constitute a POU-specific domain. Residues K241–T300 constitute a DNA-binding region (homeobox). Residues G314–H351 are disordered.

It belongs to the POU transcription factor family. Class-3 subfamily. As to expression, restricted to the middle silk gland.

The protein resides in the nucleus. Its function is as follows. Involved in the transcriptional regulation of sericin-1 gene. The polypeptide is Silk gland factor 3 (SGF3) (Bombyx mori (Silk moth)).